The sequence spans 486 residues: Cardiolipin synthase A (486 aa).

The next 2 membrane-spanning stretches (helical) occupy residues 3-23 and 38-58; these read TVYTLVSWLAILGYWLLIAGV and MAWLLIIYILPLVGIIAYLAV. PLD phosphodiesterase domains are found at residues 219–246 and 399–426; these read MDLRQHRKMIMIDNYIAYTGSMNMVDPR and EGGLLHTKSVLVDGELSLVGTVNLDMRS. Residues His224, Lys226, Asp231, His404, Lys406, and Asp411 contribute to the active site.

The protein belongs to the phospholipase D family. Cardiolipin synthase subfamily. ClsA sub-subfamily.

Its subcellular location is the cell inner membrane. The catalysed reaction is 2 a 1,2-diacyl-sn-glycero-3-phospho-(1'-sn-glycerol) = a cardiolipin + glycerol. In terms of biological role, catalyzes the reversible phosphatidyl group transfer from one phosphatidylglycerol molecule to another to form cardiolipin (CL) (diphosphatidylglycerol) and glycerol. This Shigella flexneri protein is Cardiolipin synthase A.